A 456-amino-acid chain; its full sequence is MKGPNLNFRKTPSKDNGVKQVESLARPETPPPKFVEDSNLEFNVLASEKLPNYTNLDLFHRAVFPFMFLAQCVAIMPLVGIRESNPRRVRFAYKSIPMFVTLIFMIATSILFLSMFTHLLKIGITAKNFVGLVFFGCVLSAYVVFIRLAKKWPAVVRIWTRTEIPFTKPPYEIPKRNLSRRVQLAALAIIGLSLGEHALYQVSAILSYTRRIQMCANITTVPSFNNYMQTNYDYVFQLLPYSPIIAVLILLINGACTFVWNYMDLFIMMISKGLSYRFEQITTRIRKLEHEEVCESVFIQIREHYVKMCELLEFVDSAMSSLILLSCVNNLYFVCYQLLNVFNKLRWPINYIYFWYSLLYLIGRTAFVFLTAADINEESKRGLGVLRRVSSRSWCVEVERLIFQMTTQTVALSGKKFYFLTRRLLFGMAGTIVTYELVLLQFDEPNRRKGLQPLCA.

Positions 1–30 are disordered; that stretch reads MKGPNLNFRKTPSKDNGVKQVESLARPETP. The Cytoplasmic segment spans residues 1-91; sequence MKGPNLNFRK…RESNPRRVRF (91 aa). Residues 92 to 114 form a helical membrane-spanning segment; that stretch reads AYKSIPMFVTLIFMIATSILFLS. The Extracellular segment spans residues 115–128; that stretch reads MFTHLLKIGITAKN. Residues 129–150 traverse the membrane as a helical segment; it reads FVGLVFFGCVLSAYVVFIRLAK. Gly-131 is a sucrose binding site. Residues 151-182 are Cytoplasmic-facing; that stretch reads KWPAVVRIWTRTEIPFTKPPYEIPKRNLSRRV. The helical transmembrane segment at 183–205 threads the bilayer; the sequence is QLAALAIIGLSLGEHALYQVSAI. Residues Glu-196, His-197, and Tyr-234 each coordinate sucrose. Positions 196, 197, 234, 253, and 257 each coordinate D-maltose. Over 206–245 the chain is Extracellular; the sequence is LSYTRRIQMCANITTVPSFNNYMQTNYDYVFQLLPYSPII. The helical transmembrane segment at 246 to 271 threads the bilayer; that stretch reads AVLILLINGACTFVWNYMDLFIMMIS. Sucrose is bound at residue Thr-257. Residues 272–318 lie on the Cytoplasmic side of the membrane; sequence KGLSYRFEQITTRIRKLEHEEVCESVFIQIREHYVKMCELLEFVDSA. A helical membrane pass occupies residues 319 to 342; that stretch reads MSSLILLSCVNNLYFVCYQLLNVF. Over 343–350 the chain is Extracellular; it reads NKLRWPIN. The helical transmembrane segment at 351-373 threads the bilayer; it reads YIYFWYSLLYLIGRTAFVFLTAA. Tyr-353 lines the sucrose pocket. Tyr-353 is a D-maltose binding site. The Cytoplasmic portion of the chain corresponds to 374 to 421; sequence DINEESKRGLGVLRRVSSRSWCVEVERLIFQMTTQTVALSGKKFYFLT. A helical transmembrane segment spans residues 422–441; the sequence is RRLLFGMAGTIVTYELVLLQ. The Extracellular segment spans residues 442-456; sequence FDEPNRRKGLQPLCA.

The protein belongs to the insect chemoreceptor superfamily. Gustatory receptor (GR) family. Gr5a subfamily. As to quaternary structure, homotetramer. Expressed in Gr5a-expressing sugar-sensing cells.

Its subcellular location is the cell membrane. Functionally, one of the few identified sugar gustatory receptors identified so far and which promotes the starvation-induced increase of feeding motivation. Required in combination with Gr64f to detect sucrose, maltose, and glucose. The chain is Gustatory receptor for sugar taste 64a (Gr64a) from Drosophila melanogaster (Fruit fly).